A 429-amino-acid polypeptide reads, in one-letter code: Endoglucanase type C (429 aa).

The N-terminal stretch at 1–18 (MKSLSLILSALAVQVAVA) is a signal peptide. Residue glutamine 19 is modified to Pyrrolidone carboxylic acid. 9 disulfides stabilise this stretch: cysteine 36–cysteine 42, cysteine 66–cysteine 88, cysteine 78–cysteine 84, cysteine 156–cysteine 383, cysteine 190–cysteine 213, cysteine 194–cysteine 212, cysteine 233–cysteine 252, cysteine 241–cysteine 246, and cysteine 257–cysteine 333. A glycan (N-linked (GlcNAc...) asparagine) is linked at asparagine 74. Catalysis depends on glutamate 215, which acts as the Nucleophile. The active-site Proton donor is glutamate 220. N-linked (GlcNAc...) asparagine glycans are attached at residues asparagine 265 and asparagine 318.

The protein belongs to the glycosyl hydrolase 7 (cellulase C) family.

The enzyme catalyses Endohydrolysis of (1-&gt;4)-beta-D-glucosidic linkages in cellulose, lichenin and cereal beta-D-glucans.. This chain is Endoglucanase type C, found in Fusarium oxysporum (Fusarium vascular wilt).